We begin with the raw amino-acid sequence, 677 residues long: Envelope glycoprotein (677 aa).

An N-terminal signal peptide occupies residues 1 to 33 (MGSGYQLLQLPRERFRKTSFLVWVIILFQRAIS). Residues 34 to 651 (MPLGIVTNST…DLNLWTGWRQ (618 aa)) are Extracellular-facing. A glycan (N-linked (GlcNAc...) asparagine; by host) is linked at Asn-41. Intrachain disulfides connect Cys-54-Cys-610, Cys-109-Cys-136, Cys-122-Cys-148, Cys-512-Cys-557, and Cys-602-Cys-609. Residues 55 to 202 (RDKLSSTSQL…HFWKATPAHE (148 aa)) form a receptor-binding region. Asn-205, Asn-239, Asn-258, Asn-269, Asn-297, Asn-317, Asn-318, Asn-339, Asn-406, Asn-420, Asn-435, and Asn-463 each carry an N-linked (GlcNAc...) asparagine; by host glycan. The tract at residues 306 to 486 (NLHFQILSTH…PSQPGFTINT (181 aa)) is mucin-like region. Residues 315–326 (HTNNSSDQSPAG) are compositionally biased toward polar residues. 3 disordered regions span residues 315–349 (HTNN…TDSP), 370–482 (NGET…QPGF), and 489–508 (KVAD…RQNT). 2 stretches are compositionally biased toward polar residues: residues 370–421 (NGET…ASNE) and 429–472 (NPIQ…TSPG). The fusion peptide stretch occupies residues 525–540 (GAAVGLAWIPYFGPAA). A coiled-coil region spans residues 555 to 596 (LICGLRQLANETTQALQLFLRATTELRTYSLLNRKAIDFLLQ). N-linked (GlcNAc...) asparagine; by host glycosylation is present at Asn-564. Residues 616–635 (WTKNITDEINQIKHDFIDNP) adopt a coiled-coil conformation. A glycan (N-linked (GlcNAc...) asparagine; by host) is linked at Asn-619. Residues 652–672 (WIPAGIGIIGVIIAIIALLCI) form a helical membrane-spanning segment. S-palmitoyl cysteine; by host attachment occurs at residues Cys-671 and Cys-673. The Cytoplasmic segment spans residues 673–677 (CKILC).

It belongs to the filoviruses glycoprotein family. In terms of assembly, homotrimer; each monomer consists of a GP1 and a GP2 subunit linked by disulfide bonds. The resulting peplomers (GP1,2) protrude from the virus surface as spikes. Interacts with host integrin alpha-V/ITGAV. Interacts with host CLEC10A. Binds also to host CD209 and CLEC4M/DC-SIGN(R). Interacts with host FOLR1. Interacts with BST2; this interaction inhibits the antiviral effect of BST2 and this allows viral release from infected cells. Interacts with host FCN1; this interaction enhances viral entry. Interacts with host TLR4; this interaction induces cell death in T-lymphocytes or proinflammatory cytokines and SOCS1 production in monocytes. Interacts with host entry receptor NPC1. As to quaternary structure, GP1 and GP2delta are part of GP1,2delta soluble complexes released by ectodomain shedding. Post-translationally, the signal peptide region modulates GP's high mannose glycosylation, thereby determining the efficiency of the interactions with DC-SIGN(R). In terms of processing, N-glycosylated. O-glycosylated in the mucin-like region. Post-translationally, palmitoylation of GP2 is not required for its function. In terms of processing, specific enzymatic cleavages in vivo yield mature proteins. The precursor is processed into GP1 and GP2 by host cell furin in the trans Golgi, and maybe by other host proteases, to yield the mature GP1 and GP2 proteins. The cleavage site corresponds to the furin optimal cleavage sequence [KR]-X-[KR]-R. This cleavage does not seem to be required for function. After the internalization of the virus into cell endosomes, GP1 C-terminus is removed by the endosomal proteases cathepsin B, cathepsin L, or both, leaving a 19-kDa N-terminal fragment which is further digested by cathepsin B. Proteolytic processing of GP1,2 by host ADAM17 can remove the transmembrane anchor of GP2 and leads to shedding of complexes consisting in GP1 and truncated GP2 (GP1,2delta).

The protein resides in the virion membrane. The protein localises to the host cell membrane. It localises to the secreted. Its function is as follows. Trimeric GP1,2 complexes form the virion surface spikes and mediate the viral entry processes, with GP1 acting as the receptor-binding subunit and GP2 as the membrane fusion subunit. At later times of infection, down-regulates the expression of various host cell surface molecules that are essential for immune surveillance and cell adhesion. Down-modulates several integrins including ITGA1, ITGA2, ITGA3, ITGA4, ITGA5, ITGA6, ITGAV and ITGB1. This decrease in cell adhesion molecules may lead to cell detachment, contributing to the disruption of blood vessel integrity and hemorrhages developed during infection (cytotoxicity). Interacts with host TLR4 and thereby stimulates the differentiation and activation of monocytes leading to bystander death of T-lymphocytes. Down-regulates as well the function of host natural killer cells. Counteracts the antiviral effect of host BST2/tetherin that restricts release of progeny virions from infected cells. However, cooperates with VP40 and host BST2 to activate canonical NF-kappa-B pathway in a manner dependent on neddylation. In terms of biological role, functions as a decoy for anti-GP1,2 antibodies thereby contributing to viral immune evasion. Interacts and activates host macrophages and dendritic cells inducing up-regulation of cytokine transcription. This effect is mediated throught activation of host TLR4. Functionally, responsible for binding to the receptor(s) on target cells. Interacts with CD209/DC-SIGN and CLEC4M/DC-SIGNR which act as cofactors for virus entry into dendritic cells (DCs) and endothelial cells. Binding to the macrophage specific lectin CLEC10A also seems to enhance virus infectivity. Interaction with FOLR1/folate receptor alpha may be a cofactor for virus entry in some cell types, although results are contradictory. Members of the Tyro3 receptor tyrosine kinase family also seem to be cell entry factors in filovirus infection. Once attached, the virions are internalized through clathrin-dependent endocytosis and/or macropinocytosis. After internalization of the virus into the endosomes of the host cell, proteolysis of GP1 by two cysteine proteases, CTSB/cathepsin B and CTSL/cathepsin L removes the glycan cap and allows GP1 binding to the host entry receptor NPC1. NPC1-binding, Ca(2+) and acidic pH induce a conformational change of GP2, which unmasks its fusion peptide and permit membranes fusion. Acts as a class I viral fusion protein. Under the current model, the protein has at least 3 conformational states: pre-fusion native state, pre-hairpin intermediate state, and post-fusion hairpin state. During viral and target cell membrane fusion, the coiled coil regions (heptad repeats) assume a trimer-of-hairpins structure, positioning the fusion peptide in close proximity to the C-terminal region of the ectodomain. The formation of this structure appears to drive apposition and subsequent fusion of viral and target cell membranes. Responsible for penetration of the virus into the cell cytoplasm by mediating the fusion of the membrane of the endocytosed virus particle with the endosomal membrane. Low pH in endosomes induces an irreversible conformational change in GP2, releasing the fusion hydrophobic peptide. This chain is Envelope glycoprotein (GP), found in Homo sapiens (Human).